Reading from the N-terminus, the 173-residue chain is Probable glutathione peroxidase 5 (173 aa).

Gly2 carries the N-myristoyl glycine lipid modification. Residue Cys46 is part of the active site.

This sequence belongs to the glutathione peroxidase family. In terms of tissue distribution, ubiquitous.

The protein localises to the cell membrane. It catalyses the reaction 2 glutathione + H2O2 = glutathione disulfide + 2 H2O. Its function is as follows. May constitute a glutathione peroxidase-like protective system against oxidative stresses. The polypeptide is Probable glutathione peroxidase 5 (GPX5) (Arabidopsis thaliana (Mouse-ear cress)).